The following is a 103-amino-acid chain: Large ribosomal subunit protein bL21 (103 aa).

Belongs to the bacterial ribosomal protein bL21 family. Part of the 50S ribosomal subunit. Contacts protein L20.

This protein binds to 23S rRNA in the presence of protein L20. This is Large ribosomal subunit protein bL21 from Actinobacillus pleuropneumoniae serotype 7 (strain AP76).